The sequence spans 1252 residues: MSALPGSKLSERVRTVGWQISRPYFCHFFPIRITAPPATCSANKGFPELEHARPCPKRCPGSISQAIHVGKMAAVQVAASLPCEQPREAPRELSLEQNNGFRRLSARLRALQPDDSTVSRMEIHLLFDQLISENYCEGGGVAPEDVSALLVRACQLVPLNQNHLVSKVSQLIHRLLNRLQVIVDEQNLDFLLTYTISAIQQCSPWTHMEILQALAALVYCNGSKCQKHLPDLLGKSGLLMKLSDVTHSDPEVRRAAVHCMANLCLSVPGQPYLEESYQLVCFQAFLTILQSPKSSDMDDITFCMLLQNALKGIQSLLNGGKMRLTQTEHLGALLAVLKKAMFHGLPGLNIEMPAVLYPTPLPQYDGRSPVKPQQPESSAARPSANKKKKYKVKPKKTQQGEKAEEEEPYGEVDAAPGLSMDQANTCVESAWCSSPWGSQGLPVDGGRATGREQVSSPFTISSWKRVSSSESDYSDAEGGMQGKMRSYQAKVRQGALACFLSTIKSIEKKVLYGYWSAFVPDTPELGSPQSVSLMTLTLKDPSPKTRACALQVLSAILEGSKQFLSVAEDTSDHKRAFTPFSVTIASSIRELHRCLLLALVAESSSQTLTQIIKCLANLVSNAPYNRLKLSLLTKVWNHIKPYIRHKDVNVRVSSLTLLGAVVSTHAPLPEVQLLLQQPCSSGRSSSSATPHLSTPDGWKALPAGPSLEEASLSSPKGTAEPCWLIRLCISTVVLPKEDSCSGSDAGSALGSTYEPSPMRLEALQVLAHLARGYFSMAQLYLMELGEVICKCMCEANPSIQLHGVKLLEELGTGLIQQYKPDSSTAPEQRVPVHMVAMFWTAMLNGPLPRALQSTEHPTLQASACDALSSILPEAFSSLPNDKQILCITMLLGLNDSKNHLVKAATSRALGVYVLFPCLRQDVIFVADTANAILMSLQDKSLNVRAKAAWSLGNLTDTLIVNMDTPDPSFQDEFSGLLLLKMLQSAIQASTDKDKVKSNAVRALGNLLHFLQPSHIERPRFAEIIEESIQALISTVVNEAAMKVRWNACYAMGNVFKNPALPLGTAPWTSQAYKALTSVVMSCKNFKVRIRSAAALSVPGRRAQYGSLEQFSQIWSALVTALQRSEDTTDFLEFKYCASLRTHVCQALLHLLGLASASDLPCIQETLTVNGDMIRSYILQFLKSGAGGDDPGAVHSPQERNQMVRVALRHIHSVQALAGDTAKGAIVGFLEDILTVHCDSSGERAVLRGSLDQ.

Residues 230–269 (PDLLGKSGLLMKLSDVTHSDPEVRRAAVHCMANLCLSVPG) form an HEAT 1 repeat. A disordered region spans residues 365–417 (DGRSPVKPQQPESSAARPSANKKKKYKVKPKKTQQGEKAEEEEPYGEVDAAPG). Over residues 384 to 396 (ANKKKKYKVKPKK) the composition is skewed to basic residues. Phosphoserine is present on residues Ser471 and Ser474. HEAT repeat units follow at residues 524-562 (ELGS…GSKQ), 586-624 (SSIR…NAPY), and 630-667 (SLLT…THAP). Thr689 is modified (phosphothreonine). Phosphoserine is present on Ser714.

This chain is HEAT repeat-containing protein 6 (Heatr6), found in Rattus norvegicus (Rat).